A 190-amino-acid chain; its full sequence is Transcription antitermination protein NusB (190 aa).

Residues 135–190 (APAPESVAEEADEESSDSAAAASEPTDEGDVSDSPDSSGASDEPAAPSAEIQPTVD) are disordered. A compositionally biased stretch (acidic residues) spans 141 to 150 (VAEEADEESS).

It belongs to the NusB family.

In terms of biological role, involved in transcription antitermination. Required for transcription of ribosomal RNA (rRNA) genes. Binds specifically to the boxA antiterminator sequence of the ribosomal RNA (rrn) operons. This is Transcription antitermination protein NusB from Bifidobacterium longum (strain DJO10A).